The following is a 302-amino-acid chain: Zinc import ATP-binding protein ZnuC (302 aa).

The ABC transporter domain occupies 13–228 (VSLANAGVRR…PEYLKLFGRR (216 aa)). An ATP-binding site is contributed by 45-52 (GPNGSGKS).

This sequence belongs to the ABC transporter superfamily. Zinc importer (TC 3.A.1.15.5) family. The complex is composed of two ATP-binding proteins (ZnuC), two transmembrane proteins (ZnuB) and a solute-binding protein (ZnuA).

The protein localises to the cell inner membrane. The catalysed reaction is Zn(2+)(out) + ATP(in) + H2O(in) = Zn(2+)(in) + ADP(in) + phosphate(in) + H(+)(in). Its function is as follows. Part of the ABC transporter complex ZnuABC involved in zinc import. Responsible for energy coupling to the transport system. In Rhizobium meliloti (strain 1021) (Ensifer meliloti), this protein is Zinc import ATP-binding protein ZnuC.